Consider the following 188-residue polypeptide: NEDD8-conjugating enzyme UBC12 (188 aa).

N-acetylmethionine is present on M1. The segment covering 1–12 has biased composition (basic residues); the sequence is MLKLRQLQKKKQ. The interval 1–23 is disordered; the sequence is MLKLRQLQKKKQKENENSSSIQP. Residues 27–177 enclose the UBC core domain; the sequence is AARIRLKRDL…VRLTMSGGSI (151 aa). C115 functions as the Glycyl thioester intermediate in the catalytic mechanism.

The protein belongs to the ubiquitin-conjugating enzyme family. UBC12 subfamily. As to quaternary structure, interacts with DCN1. The acetylation of Met-1 is cotranslational, and not regulatory. The N-acetylmethionine increases affinity for DCUN1D1 by about 2 orders of magnitude and is crucial for NEDD8 transfer to cullins.

It carries out the reaction [E1 NEDD8-activating enzyme]-S-[NEDD8 protein]-yl-L-cysteine + [E2 NEDD8-conjugating enzyme]-L-cysteine = [E1 NEDD8-activating enzyme]-L-cysteine + [E2 NEDD8-conjugating enzyme]-S-[NEDD8-protein]-yl-L-cysteine.. The protein operates within protein modification; protein neddylation. Accepts the ubiquitin-like protein NEDD8/RUB1 from the UBA3-ULA1 E1 complex and catalyzes its covalent attachment to other proteins. The major substrate is CDC53/Cullin. The polypeptide is NEDD8-conjugating enzyme UBC12 (UBC12) (Saccharomyces cerevisiae (strain ATCC 204508 / S288c) (Baker's yeast)).